The following is a 198-amino-acid chain: Dual specificity protein phosphatase 14 (198 aa).

The region spanning 26–167 (GIAQITSSLF…LIDYESQLFG (142 aa)) is the Tyrosine-protein phosphatase domain. Cys-111 acts as the Phosphocysteine intermediate in catalysis.

The protein belongs to the protein-tyrosine phosphatase family. Non-receptor class dual specificity subfamily.

It carries out the reaction O-phospho-L-tyrosyl-[protein] + H2O = L-tyrosyl-[protein] + phosphate. The catalysed reaction is O-phospho-L-seryl-[protein] + H2O = L-seryl-[protein] + phosphate. The enzyme catalyses O-phospho-L-threonyl-[protein] + H2O = L-threonyl-[protein] + phosphate. In terms of biological role, involved in the inactivation of MAP kinases. Dephosphorylates ERK, JNK and p38 MAP-kinases. Plays a negative role in TCR signaling by dephosphorylating MAP3K7 adapter TAB1 leading to its inactivation. The sequence is that of Dual specificity protein phosphatase 14 (Dusp14) from Mus musculus (Mouse).